The sequence spans 308 residues: Putative ankyrin repeat protein R835 (308 aa).

ANK repeat units lie at residues 100–129 (DINE…NIDL), 152–181 (PMNK…YVDF), 190–217 (SEYT…GANY), 218–247 (KSSY…DLEK), 249–277 (GLRS…EIDY), and 279–305 (YYIY…SKQI).

The protein is Putative ankyrin repeat protein R835 of Acanthamoeba polyphaga (Amoeba).